Consider the following 268-residue polypeptide: NADH-quinone oxidoreductase subunit B 1 (268 aa).

Positions 42, 43, 108, and 138 each coordinate [4Fe-4S] cluster.

Belongs to the complex I 20 kDa subunit family. As to quaternary structure, NDH-1 is composed of 14 different subunits. Subunits NuoB, C, D, E, F, and G constitute the peripheral sector of the complex. It depends on [4Fe-4S] cluster as a cofactor.

Its subcellular location is the cell membrane. The enzyme catalyses a quinone + NADH + 5 H(+)(in) = a quinol + NAD(+) + 4 H(+)(out). In terms of biological role, NDH-1 shuttles electrons from NADH, via FMN and iron-sulfur (Fe-S) centers, to quinones in the respiratory chain. The immediate electron acceptor for the enzyme in this species is believed to be ubiquinone. Couples the redox reaction to proton translocation (for every two electrons transferred, four hydrogen ions are translocated across the cytoplasmic membrane), and thus conserves the redox energy in a proton gradient. In Roseiflexus sp. (strain RS-1), this protein is NADH-quinone oxidoreductase subunit B 1.